The sequence spans 366 residues: Aminomethyltransferase (366 aa).

The protein belongs to the GcvT family. As to quaternary structure, the glycine cleavage system is composed of four proteins: P, T, L and H.

It catalyses the reaction N(6)-[(R)-S(8)-aminomethyldihydrolipoyl]-L-lysyl-[protein] + (6S)-5,6,7,8-tetrahydrofolate = N(6)-[(R)-dihydrolipoyl]-L-lysyl-[protein] + (6R)-5,10-methylene-5,6,7,8-tetrahydrofolate + NH4(+). Its function is as follows. The glycine cleavage system catalyzes the degradation of glycine. In Bacillus mycoides (strain KBAB4) (Bacillus weihenstephanensis), this protein is Aminomethyltransferase.